The following is a 187-amino-acid chain: UPF0301 protein lpl0620 (187 aa).

This sequence belongs to the UPF0301 (AlgH) family.

This is UPF0301 protein lpl0620 from Legionella pneumophila (strain Lens).